The sequence spans 286 residues: Pyridoxal kinase PdxY (286 aa).

Substrate contacts are provided by residues Ser-9 and 44–45; that span reads TQ. ATP-binding residues include Asp-111, Glu-148, and Lys-181. Residue Asp-222 coordinates substrate.

This sequence belongs to the pyridoxine kinase family. PdxY subfamily. As to quaternary structure, homodimer. It depends on Mg(2+) as a cofactor.

The enzyme catalyses pyridoxal + ATP = pyridoxal 5'-phosphate + ADP + H(+). The protein operates within cofactor metabolism; pyridoxal 5'-phosphate salvage; pyridoxal 5'-phosphate from pyridoxal: step 1/1. In terms of biological role, pyridoxal kinase involved in the salvage pathway of pyridoxal 5'-phosphate (PLP). Catalyzes the phosphorylation of pyridoxal to PLP. In Actinobacillus succinogenes (strain ATCC 55618 / DSM 22257 / CCUG 43843 / 130Z), this protein is Pyridoxal kinase PdxY.